The sequence spans 335 residues: Beta-ketoacyl-[acyl-carrier-protein] synthase III 2 (335 aa).

Active-site residues include Cys116 and His256. The segment at 257–261 is ACP-binding; the sequence is QANVR. The active site involves Asn286.

It belongs to the thiolase-like superfamily. FabH family. In terms of assembly, homodimer.

It localises to the cytoplasm. The enzyme catalyses malonyl-[ACP] + acetyl-CoA + H(+) = 3-oxobutanoyl-[ACP] + CO2 + CoA. The protein operates within lipid metabolism; fatty acid biosynthesis. Its function is as follows. Catalyzes the condensation reaction of fatty acid synthesis by the addition to an acyl acceptor of two carbons from malonyl-ACP. Catalyzes the first condensation reaction which initiates fatty acid synthesis and may therefore play a role in governing the total rate of fatty acid production. Possesses both acetoacetyl-ACP synthase and acetyl transacylase activities. Its substrate specificity determines the biosynthesis of branched-chain and/or straight-chain of fatty acids. This is Beta-ketoacyl-[acyl-carrier-protein] synthase III 2 from Bacteroides thetaiotaomicron (strain ATCC 29148 / DSM 2079 / JCM 5827 / CCUG 10774 / NCTC 10582 / VPI-5482 / E50).